The following is a 143-amino-acid chain: uncharacterized protein (143 aa).

The chain crosses the membrane as a helical span at residues 65–85 (LVWMLVGTIVLSLDIIFPALV).

The protein localises to the membrane. This is an uncharacterized protein from Saccharomyces cerevisiae (strain ATCC 204508 / S288c) (Baker's yeast).